The sequence spans 511 residues: Exodeoxyribonuclease 7 large subunit (511 aa).

This sequence belongs to the XseA family. In terms of assembly, heterooligomer composed of large and small subunits.

The protein resides in the cytoplasm. It carries out the reaction Exonucleolytic cleavage in either 5'- to 3'- or 3'- to 5'-direction to yield nucleoside 5'-phosphates.. Bidirectionally degrades single-stranded DNA into large acid-insoluble oligonucleotides, which are then degraded further into small acid-soluble oligonucleotides. The polypeptide is Exodeoxyribonuclease 7 large subunit (Brucella abortus (strain S19)).